The chain runs to 230 residues: UPF0758 protein ABC2615 (230 aa).

Positions Val104–Phe226 constitute an MPN domain. The Zn(2+) site is built by His175, His177, and Asp188. The JAMM motif signature appears at His175–Asp188.

This sequence belongs to the UPF0758 family.

This chain is UPF0758 protein ABC2615, found in Shouchella clausii (strain KSM-K16) (Alkalihalobacillus clausii).